A 136-amino-acid chain; its full sequence is Holo-[acyl-carrier-protein] synthase (136 aa).

Residues Asp8 and Glu57 each coordinate Mg(2+).

Belongs to the P-Pant transferase superfamily. AcpS family. The cofactor is Mg(2+).

The protein localises to the cytoplasm. The catalysed reaction is apo-[ACP] + CoA = holo-[ACP] + adenosine 3',5'-bisphosphate + H(+). Its function is as follows. Transfers the 4'-phosphopantetheine moiety from coenzyme A to a Ser of acyl-carrier-protein. The sequence is that of Holo-[acyl-carrier-protein] synthase from Methylorubrum extorquens (strain PA1) (Methylobacterium extorquens).